A 663-amino-acid chain; its full sequence is ATP-dependent zinc metalloprotease FtsH (663 aa).

Over 1–12 the chain is Stromal; sequence MNKKETNTSWWR. Residues 13 to 33 traverse the membrane as a helical segment; that stretch reads IILISLGISIICILAAFLAMK. The Lumenal portion of the chain corresponds to 34–135; it reads DGFFVLENNT…HPPKLDIFKT (102 aa). Residues 136–156 form a helical membrane-spanning segment; sequence ISDTLGSLIVPGLVVAVFYLF. At 157 to 663 the chain is on the stromal side; sequence LERANNNNNN…KIYESKFPKK (507 aa). The disordered stretch occupies residues 165–184; sequence NNNSNGSPFGPGGGPNQNMR. 244–251 provides a ligand contact to ATP; it reads GPPGTGKT. Residue histidine 465 coordinates Zn(2+). The active site involves glutamate 466. Residues histidine 469 and aspartate 543 each contribute to the Zn(2+) site.

This sequence in the central section; belongs to the AAA ATPase family. In the C-terminal section; belongs to the peptidase M41 family. In terms of assembly, homohexamer. It depends on Zn(2+) as a cofactor.

It is found in the plastid. The protein resides in the chloroplast thylakoid membrane. In terms of biological role, acts as a processive, ATP-dependent zinc metallopeptidase. This chain is ATP-dependent zinc metalloprotease FtsH, found in Heterosigma akashiwo (strain NIES-293 / 8280G21-1).